The sequence spans 373 residues: 4-hydroxy-3-methylbut-2-en-1-yl diphosphate synthase (flavodoxin) (373 aa).

Cys270, Cys273, Cys305, and Glu312 together coordinate [4Fe-4S] cluster.

It belongs to the IspG family. It depends on [4Fe-4S] cluster as a cofactor.

It catalyses the reaction (2E)-4-hydroxy-3-methylbut-2-enyl diphosphate + oxidized [flavodoxin] + H2O + 2 H(+) = 2-C-methyl-D-erythritol 2,4-cyclic diphosphate + reduced [flavodoxin]. Its pathway is isoprenoid biosynthesis; isopentenyl diphosphate biosynthesis via DXP pathway; isopentenyl diphosphate from 1-deoxy-D-xylulose 5-phosphate: step 5/6. Its function is as follows. Converts 2C-methyl-D-erythritol 2,4-cyclodiphosphate (ME-2,4cPP) into 1-hydroxy-2-methyl-2-(E)-butenyl 4-diphosphate. This is 4-hydroxy-3-methylbut-2-en-1-yl diphosphate synthase (flavodoxin) from Vibrio atlanticus (strain LGP32) (Vibrio splendidus (strain Mel32)).